A 210-amino-acid chain; its full sequence is Large ribosomal subunit protein uL4 (210 aa).

A disordered region spans residues 49 to 76 (HCTKTRSEVSGGGKKPWRQKHTGRARHG). The span at 63–76 (KPWRQKHTGRARHG) shows a compositional bias: basic residues.

The protein belongs to the universal ribosomal protein uL4 family. Part of the 50S ribosomal subunit.

Its function is as follows. One of the primary rRNA binding proteins, this protein initially binds near the 5'-end of the 23S rRNA. It is important during the early stages of 50S assembly. It makes multiple contacts with different domains of the 23S rRNA in the assembled 50S subunit and ribosome. Forms part of the polypeptide exit tunnel. This Thermodesulfovibrio yellowstonii (strain ATCC 51303 / DSM 11347 / YP87) protein is Large ribosomal subunit protein uL4.